Here is a 259-residue protein sequence, read N- to C-terminus: Phosphoadenosine 5'-phosphosulfate reductase (259 aa).

C244 serves as the catalytic Nucleophile; cysteine thiosulfonate intermediate.

The protein belongs to the PAPS reductase family. CysH subfamily.

The protein localises to the cytoplasm. The enzyme catalyses [thioredoxin]-disulfide + sulfite + adenosine 3',5'-bisphosphate + 2 H(+) = [thioredoxin]-dithiol + 3'-phosphoadenylyl sulfate. Its pathway is sulfur metabolism; hydrogen sulfide biosynthesis; sulfite from sulfate: step 3/3. Functionally, catalyzes the formation of sulfite from phosphoadenosine 5'-phosphosulfate (PAPS) using thioredoxin as an electron donor. The protein is Phosphoadenosine 5'-phosphosulfate reductase of Vibrio campbellii (strain ATCC BAA-1116).